The chain runs to 156 residues: Ribonuclease H (156 aa).

An RNase H type-1 domain is found at Gln-7–Ile-148. The Mg(2+) site is built by Asp-16, Glu-54, Asp-76, and Asp-140.

It belongs to the RNase H family. In terms of assembly, monomer. Mg(2+) is required as a cofactor.

It localises to the cytoplasm. The enzyme catalyses Endonucleolytic cleavage to 5'-phosphomonoester.. Endonuclease that specifically degrades the RNA of RNA-DNA hybrids. The polypeptide is Ribonuclease H (rnhA) (Zymomonas mobilis subsp. mobilis (strain ATCC 31821 / ZM4 / CP4)).